The following is a 275-amino-acid chain: Ammonia transport outward protein 3 (275 aa).

Over 1-84 (MTSSASSPQD…NCAKYTPHQF (84 aa)) the chain is Extracellular. Serine 4 bears the Phosphoserine mark. A helical membrane pass occupies residues 85 to 105 (ANPVPLGLASFSLSCLVLSLI). Over 106–120 (NANVRGVTDGKWALS) the chain is Cytoplasmic. Residues 121–141 (LFMFFGGAIELFAGLLCFVIG) form a helical membrane-spanning segment. Topologically, residues 142–181 (DTYAMTVFSSFGGFWICYGYGLTDTDNLVSGYTDPTMLNN) are extracellular. Residues 182–202 (VIGFFLAGWTVFTFLMLMCTL) traverse the membrane as a helical segment. Residues 203-207 (KSTWG) lie on the Cytoplasmic side of the membrane. The helical transmembrane segment at 208–228 (LFLLLTFLDLTFLLLCIGTFI) threads the bilayer. The Extracellular portion of the chain corresponds to 229 to 236 (DNNNLKMA). A helical membrane pass occupies residues 237 to 257 (GGYFGILSSCCGWYSLYCSVV). Topologically, residues 258-275 (SPSNSYLAFRAHTMPNAP) are cytoplasmic.

This sequence belongs to the acetate uptake transporter (AceTr) (TC 2.A.96) family.

The protein localises to the cell membrane. In terms of biological role, transporter protein required for ammonia export. Induced in rho(0) cells, probably to eliminate the excess ammonia that arises because of a potential defect in ammonia assimilation in those cells. In Saccharomyces cerevisiae (strain ATCC 204508 / S288c) (Baker's yeast), this protein is Ammonia transport outward protein 3 (ATO3).